A 95-amino-acid polypeptide reads, in one-letter code: MKNYVFALLVVTAVAIALPNEDKNAPMRVHLLPQKEDESLKLEVTPVKEHHRTRRFTCDLLSGAGVDHSACAAHCILRGKTGGRCNSDRVCVCRA.

An N-terminal signal peptide occupies residues 1–17; sequence MKNYVFALLVVTAVAIA. A propeptide spanning residues 18-55 is cleaved from the precursor; that stretch reads LPNEDKNAPMRVHLLPQKEDESLKLEVTPVKEHHRTRR. 3 cysteine pairs are disulfide-bonded: C58–C85, C71–C91, and C75–C93.

Belongs to the invertebrate defensin family. Type 1 subfamily.

It is found in the secreted. Functionally, antibacterial peptide mostly active against Gram-positive bacteria. This is Defensin from Formica aquilonia (Red wood ant).